We begin with the raw amino-acid sequence, 203 residues long: Ribosome maturation factor RimP (203 aa).

Residues 183 to 203 are disordered; sequence FDDIETEGSAEGTTGSEEENK.

The protein belongs to the RimP family.

It localises to the cytoplasm. Functionally, required for maturation of 30S ribosomal subunits. The sequence is that of Ribosome maturation factor RimP from Ruegeria sp. (strain TM1040) (Silicibacter sp.).